A 186-amino-acid chain; its full sequence is MLTPILALTALALIAGALLGFAAVRFRVEGNPIADQVDAVLPQTQCGQCGFGGCRPYAEAIAAGEAEINRCPPGGQDTVQTLADLLGVEPLPLDEERGEAPHTPQVAWVDEAVCIGCTRCIQACPVDAILGAAKQMHTVLKGECTGCGLCVDPCPVDCIHMVPVDLDLAEWHWPLPQNDTARREVA.

Residues 1–23 form a hydrophobic region; that stretch reads MLTPILALTALALIAGALLGFAA. In terms of domain architecture, 4Fe-4S spans 29–88; it reads EGNPIADQVDAVLPQTQCGQCGFGGCRPYAEAIAAGEAEINRCPPGGQDTVQTLADLLGV. Residues Cys-46, Cys-49, Cys-54, Cys-71, Cys-114, Cys-117, Cys-120, Cys-124, Cys-144, Cys-147, Cys-150, and Cys-154 each contribute to the [4Fe-4S] cluster site. 4Fe-4S ferredoxin-type domains follow at residues 105–134 and 135–164; these read QVAW…GAAK and QMHT…MVPV.

Belongs to the 4Fe4S bacterial-type ferredoxin family. RnfB subfamily. In terms of assembly, the complex is composed of six subunits: RnfA, RnfB, RnfC, RnfD, RnfE and RnfG. Requires [4Fe-4S] cluster as cofactor.

The protein localises to the cell inner membrane. In terms of biological role, part of a membrane-bound complex that couples electron transfer with translocation of ions across the membrane. The protein is Ion-translocating oxidoreductase complex subunit B of Alkalilimnicola ehrlichii (strain ATCC BAA-1101 / DSM 17681 / MLHE-1).